Reading from the N-terminus, the 501-residue chain is Mitogen-activated protein kinase MKC1 (501 aa).

The Protein kinase domain occupies 28-339; it reads FKIVKELGHG…VRDALNHKYL (312 aa). ATP contacts are provided by residues 34–42 and K74; that span reads LGHGAYGIV. D174 functions as the Proton acceptor in the catalytic mechanism. Position 211 is a phosphothreonine (T211). Residues 211–213 carry the TXY motif; sequence TEY. Phosphotyrosine is present on Y213. The tract at residues 400–450 is disordered; the sequence is MQKREEQRQEEEEKELLEQQRQFPAQESMDISQTPYNNLETNIGTPQVEDD. The span at 422-444 shows a compositional bias: polar residues; sequence FPAQESMDISQTPYNNLETNIGT.

The protein belongs to the protein kinase superfamily. CMGC Ser/Thr protein kinase family. MAP kinase subfamily. It depends on Mg(2+) as a cofactor. Dually phosphorylated on Thr-211 and Tyr-213, which activates the enzyme.

It catalyses the reaction L-seryl-[protein] + ATP = O-phospho-L-seryl-[protein] + ADP + H(+). The enzyme catalyses L-threonyl-[protein] + ATP = O-phospho-L-threonyl-[protein] + ADP + H(+). Activated by tyrosine and threonine phosphorylation. The chain is Mitogen-activated protein kinase MKC1 (MKC1) from Candida albicans (Yeast).